Here is a 282-residue protein sequence, read N- to C-terminus: Probable porphobilinogen deaminase (282 aa).

S-(dipyrrolylmethanemethyl)cysteine is present on Cys233.

The protein belongs to the HMBS family. Requires dipyrromethane as cofactor.

It carries out the reaction 4 porphobilinogen + H2O = hydroxymethylbilane + 4 NH4(+). The protein operates within porphyrin-containing compound metabolism; protoporphyrin-IX biosynthesis; coproporphyrinogen-III from 5-aminolevulinate: step 2/4. Functionally, tetrapolymerization of the monopyrrole PBG into the hydroxymethylbilane pre-uroporphyrinogen in several discrete steps. The protein is Probable porphobilinogen deaminase of Picrophilus torridus (strain ATCC 700027 / DSM 9790 / JCM 10055 / NBRC 100828 / KAW 2/3).